Consider the following 645-residue polypeptide: Heat shock protein SSA2 (645 aa).

Position 2 is an N-acetylserine (Ser-2). The disordered stretch occupies residues 581–645 (ANQTATQEEF…NDGPTVEEVD (65 aa)). Low complexity predominate over residues 611–621 (AGATPSGAAGA).

The protein belongs to the heat shock protein 70 family. Binds human histatin-5, an antifungal peptide from saliva.

It localises to the cytoplasm. The protein localises to the secreted. It is found in the cell wall. In terms of biological role, heat shock protein that may play a role in the transport of polypeptides both across the mitochondrial membranes and into the endoplasmic reticulum. Acts as a highly immunodominant antigen. Plays a role in the sensitivity to, and the import of candidacidal beta-defensin peptides. HSP70/SSA1 and SSA2 bind histatin-5, a peptide from human saliva, and mediates its fungicidal activity. SSA2 facilitates fungicidal activity of Hst 5 in binding and intracellular translocation, whereas HSP70/SSA1 appears to have a lesser functional role in Hst 5 toxicity. This is Heat shock protein SSA2 from Candida albicans (strain SC5314 / ATCC MYA-2876) (Yeast).